The sequence spans 586 residues: Aspartate--tRNA(Asp/Asn) ligase (586 aa).

Residue glutamate 172 coordinates L-aspartate. The aspartate stretch occupies residues 196 to 199; sequence QLYK. L-aspartate is bound at residue arginine 218. Residues 218-220 and glutamine 227 each bind ATP; that span reads RDE. L-aspartate is bound at residue histidine 446. Residue glutamate 480 coordinates ATP. An L-aspartate-binding site is contributed by arginine 487. ATP is bound at residue 532–535; the sequence is GIDR.

It belongs to the class-II aminoacyl-tRNA synthetase family. Type 1 subfamily. As to quaternary structure, homodimer.

Its subcellular location is the cytoplasm. It carries out the reaction tRNA(Asx) + L-aspartate + ATP = L-aspartyl-tRNA(Asx) + AMP + diphosphate. In terms of biological role, aspartyl-tRNA synthetase with relaxed tRNA specificity since it is able to aspartylate not only its cognate tRNA(Asp) but also tRNA(Asn). Reaction proceeds in two steps: L-aspartate is first activated by ATP to form Asp-AMP and then transferred to the acceptor end of tRNA(Asp/Asn). The sequence is that of Aspartate--tRNA(Asp/Asn) ligase from Borreliella afzelii (strain PKo) (Borrelia afzelii).